Here is a 342-residue protein sequence, read N- to C-terminus: MTDKKEILVHDMSLRDGMHSVRHQFSLAQMIELSTALDEAGVPLIEVTHGDGLGGHSVNYGFAAHSDREYLEAVIPRMQQARVSALLLPGIGTVDDLRMAADCGVHCLRVATQCTEADVAEQHIGLSRKLGLDTVGFLMMAHMLPAEGLLEQARLMESYGANCVYMTDSAGYMLPEEVREKVSALREGLADETEVGFHGHHNLAMGVANSVAAVEAGAKRIDGSVAGFGAGAGNTPLEVFIAVCERMGICTGVDLGRIQDVAEDVALPMMDAPTRIDRDSLTLGYAGVYSSFLLHAKRAEANHGVPARDILVELGARRTVGGQEDMIEDVALEMSRARSASA.

Residues 7-259 (ILVHDMSLRD…CTGVDLGRIQ (253 aa)) enclose the Pyruvate carboxyltransferase domain. 15–16 (RD) serves as a coordination point for substrate. Aspartate 16 provides a ligand contact to Mn(2+). Residue histidine 19 is the Proton acceptor of the active site. Positions 169 and 198 each coordinate substrate. Positions 198 and 200 each coordinate Mn(2+). Tyrosine 289 contributes to the substrate binding site.

This sequence belongs to the 4-hydroxy-2-oxovalerate aldolase family.

It carries out the reaction (S)-4-hydroxy-2-oxopentanoate = acetaldehyde + pyruvate. The polypeptide is 4-hydroxy-2-oxovalerate aldolase (Alkalilimnicola ehrlichii (strain ATCC BAA-1101 / DSM 17681 / MLHE-1)).